The sequence spans 202 residues: Adenosylcobalamin/alpha-ribazole phosphatase (202 aa).

Catalysis depends on His-8, which acts as the Tele-phosphohistidine intermediate. Glu-81 acts as the Proton donor/acceptor in catalysis.

Belongs to the phosphoglycerate mutase family.

It carries out the reaction adenosylcob(III)alamin 5'-phosphate + H2O = adenosylcob(III)alamin + phosphate. It catalyses the reaction alpha-ribazole 5'-phosphate + H2O = alpha-ribazole + phosphate. It participates in nucleoside biosynthesis; alpha-ribazole biosynthesis; alpha-ribazole from 5,6-dimethylbenzimidazole: step 2/2. Functionally, catalyzes the conversion of adenosylcobalamin 5'-phosphate to adenosylcobalamin (vitamin B12); involved in the assembly of the nucleotide loop of cobalamin. Also catalyzes the hydrolysis of the phospho group from alpha-ribazole 5'-phosphate to form alpha-ribazole. The sequence is that of Adenosylcobalamin/alpha-ribazole phosphatase (cobC) from Salmonella typhi.